The chain runs to 226 residues: DNA mismatch repair protein MutH (226 aa).

The protein belongs to the MutH family.

It localises to the cytoplasm. Sequence-specific endonuclease that cleaves unmethylated GATC sequences. It is involved in DNA mismatch repair. In Actinobacillus pleuropneumoniae serotype 5b (strain L20), this protein is DNA mismatch repair protein MutH.